The following is a 146-amino-acid chain: Hemoglobin subunit beta-2 (146 aa).

The 145-residue stretch at 2–146 (HWSAEEKQLI…VAHALARRYH (145 aa)) folds into the Globin domain. Residues H63 and H92 each coordinate heme b.

This sequence belongs to the globin family. In terms of assembly, heterotetramer of two alpha chains and two beta chains. Red blood cells.

Functionally, involved in oxygen transport from the lung to the various peripheral tissues. The sequence is that of Hemoglobin subunit beta-2 (HBB2) from Naja naja (Indian cobra).